Here is a 263-residue protein sequence, read N- to C-terminus: Probable septum site-determining protein MinC (263 aa).

Residues L107–V159 are disordered. Basic and acidic residues-rich tracts occupy residues A112–E129 and A138–A150.

It belongs to the MinC family. Interacts with MinD and FtsZ.

Cell division inhibitor that blocks the formation of polar Z ring septums. Rapidly oscillates between the poles of the cell to destabilize FtsZ filaments that have formed before they mature into polar Z rings. Prevents FtsZ polymerization. This is Probable septum site-determining protein MinC from Pseudomonas aeruginosa (strain UCBPP-PA14).